A 370-amino-acid chain; its full sequence is F-box protein At3g20690 (370 aa).

The F-box domain occupies 1–45; it reads MMMSDLPHDLVEEILSRLPLISLKAMRSTCKTWNVLSKHRSFANK.

In Arabidopsis thaliana (Mouse-ear cress), this protein is F-box protein At3g20690.